A 132-amino-acid polypeptide reads, in one-letter code: Small ribosomal subunit protein uS8c (132 aa).

This sequence belongs to the universal ribosomal protein uS8 family. As to quaternary structure, part of the 30S ribosomal subunit.

The protein resides in the plastid. The protein localises to the chloroplast. Its function is as follows. One of the primary rRNA binding proteins, it binds directly to 16S rRNA central domain where it helps coordinate assembly of the platform of the 30S subunit. This chain is Small ribosomal subunit protein uS8c (rps8), found in Guillardia theta (Cryptophyte).